We begin with the raw amino-acid sequence, 152 residues long: Protein IpgF (152 aa).

A signal peptide spans 1–17 (MSRFVFILLCFIPYLGR).

It belongs to the IagB/IpgF/P19 family.

The sequence is that of Protein IpgF (ipgF) from Shigella sonnei.